The primary structure comprises 135 residues: Small ribosomal subunit protein uS9 (135 aa).

Residues 108–118 are compositionally biased toward basic and acidic residues; that stretch reads VGDPRRTEPHK. Positions 108-135 are disordered; it reads VGDPRRTEPHKPNRSTKGPRAKRQKSYR. Over residues 119-135 the composition is skewed to basic residues; that stretch reads PNRSTKGPRAKRQKSYR.

It belongs to the universal ribosomal protein uS9 family.

The sequence is that of Small ribosomal subunit protein uS9 (rps9) from Pyrococcus horikoshii (strain ATCC 700860 / DSM 12428 / JCM 9974 / NBRC 100139 / OT-3).